The sequence spans 460 residues: MAQQEASPSPGAEVVGRAFVEQYYHILHQSPGLVHRFYQDSSFLTRPDVTGAVTTVTTMQAINDKILSLKYEDYTAEIETADAQESHERGVIVLVTGRLTGNDNVRKKFSQSFFLAPQDKGYFVLNDVFRFLEEKEVTAQARSVPINGTTRDVQAPIEPERVVVSHEPEVEPEPVASIEEEDLDNVAEVYDPSDKDEGVVVDVEPIEPPTQISHNEILSVPQGDAPKHSYASILKQMKSSPAPTTHVARNKPRPAPVNQKLTAPPAEPAARPEASAHENVPNSSHVDVEDDGHSIYVRNLPFDSTPTQLEEVFKNFGAIKHEGIQVRSNKQQGFCFGFVEFETSSGKQSALEASPVTIGDRQAVVEEKKTNSRGGGNNGGSRGRYFSGRGSFRNESFKGGRGGGGRGGYGRGGGEFSGRPKSSNPRNGGEGYQRVPQNGGGGRGGRGEGGRGGARGGGSS.

In terms of domain architecture, NTF2 spans 15–131 (VGRAFVEQYY…YFVLNDVFRF (117 aa)). 3 disordered regions span residues 207 to 226 (EPPT…GDAP), 238 to 289 (KSSP…VDVE), and 361 to 460 (RQAV…GGSS). The region spanning 293–370 (HSIYVRNLPF…RQAVVEEKKT (78 aa)) is the RRM domain. A compositionally biased stretch (gly residues) spans 373–382 (RGGGNNGGSR). Over residues 383 to 394 (GRYFSGRGSFRN) the composition is skewed to low complexity. Gly residues-rich tracts occupy residues 399-416 (GGRG…GGEF) and 450-460 (GRGGARGGGSS).

In terms of assembly, interacts with MBD6.

The protein localises to the cytoplasm. The protein resides in the nucleus. Its function is as follows. Involved in RNA-directed DNA methylation (RdDM). In Arabidopsis thaliana (Mouse-ear cress), this protein is Nuclear transport factor 2.